The following is a 75-amino-acid chain: Translational regulator CsrA (75 aa).

The protein belongs to the CsrA/RsmA family. Homodimer; the beta-strands of each monomer intercalate to form a hydrophobic core, while the alpha-helices form wings that extend away from the core.

The protein localises to the cytoplasm. In terms of biological role, a translational regulator that binds mRNA to regulate translation initiation and/or mRNA stability. Usually binds in the 5'-UTR at or near the Shine-Dalgarno sequence preventing ribosome-binding, thus repressing translation. Its main target seems to be the major flagellin gene, while its function is anatagonized by FliW. In Alkaliphilus metalliredigens (strain QYMF), this protein is Translational regulator CsrA.